The primary structure comprises 304 residues: Aspartate carbamoyltransferase catalytic subunit (304 aa).

2 residues coordinate carbamoyl phosphate: R54 and T55. K83 is an L-aspartate binding site. Carbamoyl phosphate-binding residues include R104, H132, and Q135. The L-aspartate site is built by R165 and R226. Carbamoyl phosphate contacts are provided by L265 and P266.

This sequence belongs to the aspartate/ornithine carbamoyltransferase superfamily. ATCase family. Heterooligomer of catalytic and regulatory chains.

It carries out the reaction carbamoyl phosphate + L-aspartate = N-carbamoyl-L-aspartate + phosphate + H(+). It functions in the pathway pyrimidine metabolism; UMP biosynthesis via de novo pathway; (S)-dihydroorotate from bicarbonate: step 2/3. In terms of biological role, catalyzes the condensation of carbamoyl phosphate and aspartate to form carbamoyl aspartate and inorganic phosphate, the committed step in the de novo pyrimidine nucleotide biosynthesis pathway. This is Aspartate carbamoyltransferase catalytic subunit from Pyrobaculum neutrophilum (strain DSM 2338 / JCM 9278 / NBRC 100436 / V24Sta) (Thermoproteus neutrophilus).